Consider the following 261-residue polypeptide: Ribosome-inactivating protein PD-L1/PD-L2 (261 aa).

2 N-linked (GlcNAc...) asparagine; in PD-L1 and PD-L2 glycosylation sites follow: Asn-10 and Asn-43. Disulfide bonds link Cys-34–Cys-258 and Cys-84–Cys-105. Tyr-72 is an active-site residue. Residue Val-73 participates in substrate binding. Ser-120 serves as a coordination point for substrate. Active-site residues include Tyr-122, Glu-175, and Arg-178. Arg-178 is a substrate binding site. Asn-255 is a glycosylation site (N-linked (GlcNAc...) asparagine; in PD-L1).

This sequence belongs to the ribosome-inactivating protein family. Type 1 RIP subfamily. Post-translationally, N-glycosylated. Loss of glycosylation does not affect DNA-cleaving ability. Loss of glycosylation does not affect protein synthesis inhibition, but increases adenine polynucleotide glycosidase activity likely as a consequence of the increased accessibility of substrates to the active site pocket in the absence of glycosylation. As to expression, expressed in leaves (at protein level).

It catalyses the reaction Endohydrolysis of the N-glycosidic bond at one specific adenosine on the 28S rRNA.. Its function is as follows. Inhibits protein synthesis. Has adenine polynucleotide glycosidase activity on herring sperm (hs)DNA and poly(A) substrates. Cleaves supercoiled pBR322 dsDNA. This is Ribosome-inactivating protein PD-L1/PD-L2 from Phytolacca dioica (Bella sombra tree).